A 598-amino-acid polypeptide reads, in one-letter code: UvrABC system protein C (598 aa).

The 78-residue stretch at 14 to 91 folds into the GIY-YIG domain; sequence DSPGCYLHKD…IQKNMPKYNI (78 aa). The UVR domain maps to 196–231; sequence DKIIEDLRSKMLAASEEMAFERAAEYRDLISGIATM.

The protein belongs to the UvrC family. Interacts with UvrB in an incision complex.

It localises to the cytoplasm. In terms of biological role, the UvrABC repair system catalyzes the recognition and processing of DNA lesions. UvrC both incises the 5' and 3' sides of the lesion. The N-terminal half is responsible for the 3' incision and the C-terminal half is responsible for the 5' incision. The chain is UvrABC system protein C from Streptococcus pyogenes serotype M6 (strain ATCC BAA-946 / MGAS10394).